A 180-amino-acid chain; its full sequence is Large ribosomal subunit protein uL6 (180 aa).

Belongs to the universal ribosomal protein uL6 family. Part of the 50S ribosomal subunit.

Functionally, this protein binds to the 23S rRNA, and is important in its secondary structure. It is located near the subunit interface in the base of the L7/L12 stalk, and near the tRNA binding site of the peptidyltransferase center. The sequence is that of Large ribosomal subunit protein uL6 from Borrelia garinii subsp. bavariensis (strain ATCC BAA-2496 / DSM 23469 / PBi) (Borreliella bavariensis).